The primary structure comprises 400 residues: Nicotinate phosphoribosyltransferase (400 aa).

At H220 the chain carries Phosphohistidine; by autocatalysis.

This sequence belongs to the NAPRTase family. Transiently phosphorylated on a His residue during the reaction cycle. Phosphorylation strongly increases the affinity for substrates and increases the rate of nicotinate D-ribonucleotide production. Dephosphorylation regenerates the low-affinity form of the enzyme, leading to product release.

It carries out the reaction nicotinate + 5-phospho-alpha-D-ribose 1-diphosphate + ATP + H2O = nicotinate beta-D-ribonucleotide + ADP + phosphate + diphosphate. It participates in cofactor biosynthesis; NAD(+) biosynthesis; nicotinate D-ribonucleotide from nicotinate: step 1/1. In terms of biological role, catalyzes the synthesis of beta-nicotinate D-ribonucleotide from nicotinate and 5-phospho-D-ribose 1-phosphate at the expense of ATP. This chain is Nicotinate phosphoribosyltransferase, found in Escherichia coli (strain K12 / MC4100 / BW2952).